The chain runs to 123 residues: Large ribosomal subunit protein uL14c (123 aa).

Belongs to the universal ribosomal protein uL14 family. In terms of assembly, part of the 50S ribosomal subunit.

Its subcellular location is the plastid. It localises to the chloroplast. Functionally, binds to 23S rRNA. This chain is Large ribosomal subunit protein uL14c, found in Brachypodium distachyon (Purple false brome).